The following is a 696-amino-acid chain: DNA ligase (696 aa).

NAD(+) contacts are provided by residues 55 to 59 (DYEFD), 105 to 106 (SL), and glutamate 137. The active-site N6-AMP-lysine intermediate is the lysine 139. Residues arginine 160, glutamate 194, lysine 310, and lysine 334 each contribute to the NAD(+) site. Cysteine 428, cysteine 431, cysteine 446, and cysteine 451 together coordinate Zn(2+). Residues 615–696 (NVNPNFVGKN…EFIELKDKFD (82 aa)) form the BRCT domain.

Belongs to the NAD-dependent DNA ligase family. LigA subfamily. Requires Mg(2+) as cofactor. The cofactor is Mn(2+).

It carries out the reaction NAD(+) + (deoxyribonucleotide)n-3'-hydroxyl + 5'-phospho-(deoxyribonucleotide)m = (deoxyribonucleotide)n+m + AMP + beta-nicotinamide D-nucleotide.. Its function is as follows. DNA ligase that catalyzes the formation of phosphodiester linkages between 5'-phosphoryl and 3'-hydroxyl groups in double-stranded DNA using NAD as a coenzyme and as the energy source for the reaction. It is essential for DNA replication and repair of damaged DNA. This is DNA ligase from Fusobacterium nucleatum subsp. nucleatum (strain ATCC 25586 / DSM 15643 / BCRC 10681 / CIP 101130 / JCM 8532 / KCTC 2640 / LMG 13131 / VPI 4355).